A 943-amino-acid polypeptide reads, in one-letter code: Isoleucine--tRNA ligase (943 aa).

Positions 58 to 68 match the 'HIGH' region motif; the sequence is PYANGTIHIGH. Position 567 (glutamate 567) interacts with L-isoleucyl-5'-AMP. Residues 608–612 carry the 'KMSKS' region motif; it reads KMSKS. Lysine 611 contributes to the ATP binding site. The Zn(2+) site is built by cysteine 906, cysteine 909, cysteine 926, and cysteine 929.

This sequence belongs to the class-I aminoacyl-tRNA synthetase family. IleS type 1 subfamily. Monomer. Requires Zn(2+) as cofactor.

It localises to the cytoplasm. It catalyses the reaction tRNA(Ile) + L-isoleucine + ATP = L-isoleucyl-tRNA(Ile) + AMP + diphosphate. In terms of biological role, catalyzes the attachment of isoleucine to tRNA(Ile). As IleRS can inadvertently accommodate and process structurally similar amino acids such as valine, to avoid such errors it has two additional distinct tRNA(Ile)-dependent editing activities. One activity is designated as 'pretransfer' editing and involves the hydrolysis of activated Val-AMP. The other activity is designated 'posttransfer' editing and involves deacylation of mischarged Val-tRNA(Ile). The sequence is that of Isoleucine--tRNA ligase from Pseudomonas fluorescens (strain Pf0-1).